We begin with the raw amino-acid sequence, 359 residues long: Ornithine carbamoyltransferase, mitochondrial (359 aa).

The N-terminal 24 residues, 1–24, are a transit peptide targeting the mitochondrion; sequence MASLRSVLKSQSLRHTVRSYSSQT. Residues 87–90, arginine 138, histidine 165, and glutamine 168 each bind carbamoyl phosphate; that span reads STRT. The L-ornithine site is built by asparagine 205, aspartate 271, serine 275, and methionine 276. Residue cysteine 313 is the Proton acceptor of the active site. Residues 313 to 314 and arginine 340 each bind carbamoyl phosphate; that span reads CL.

It belongs to the aspartate/ornithine carbamoyltransferase superfamily. OTCase family. As to quaternary structure, homotrimer.

It is found in the mitochondrion matrix. The catalysed reaction is carbamoyl phosphate + L-ornithine = L-citrulline + phosphate + H(+). The protein operates within amino-acid biosynthesis; L-arginine biosynthesis; L-arginine from L-ornithine and carbamoyl phosphate: step 1/3. The chain is Ornithine carbamoyltransferase, mitochondrial (argB) from Emericella nidulans (strain FGSC A4 / ATCC 38163 / CBS 112.46 / NRRL 194 / M139) (Aspergillus nidulans).